Reading from the N-terminus, the 411-residue chain is Probable UDP-arabinose 4-epimerase 3 (411 aa).

Residues 1-13 are compositionally biased toward polar residues; the sequence is MLSFSRARSQGRN. The disordered stretch occupies residues 1-22; that stretch reads MLSFSRARSQGRNTRPLGGGME. The Cytoplasmic segment spans residues 1-31; it reads MLSFSRARSQGRNTRPLGGGMEYLEPKRKSN. Residues 32 to 50 form a helical; Signal-anchor for type II membrane protein membrane-spanning segment; sequence VMGKIILVVSLTALCIFML. At 51 to 411 the chain is on the lumenal side; it reads KHAPSFTSPT…KTHPHGYASS (361 aa). 71–102 serves as a coordination point for NAD(+); it reads HVLVTGGAGYIGSHAALRLLKDSYRVTIVDNL. Residue tyrosine 219 is the Proton acceptor of the active site.

It belongs to the NAD(P)-dependent epimerase/dehydratase family. NAD(+) serves as cofactor.

Its subcellular location is the golgi apparatus. It is found in the golgi stack membrane. The catalysed reaction is UDP-beta-L-arabinopyranose = UDP-alpha-D-xylose. Its pathway is nucleotide-sugar biosynthesis; UDP-L-arabinose biosynthesis; UDP-L-arabinose from UDP-alpha-D-xylose: step 1/1. The protein operates within cell wall biogenesis; cell wall polysaccharide biosynthesis. The protein is Probable UDP-arabinose 4-epimerase 3 of Arabidopsis thaliana (Mouse-ear cress).